A 334-amino-acid polypeptide reads, in one-letter code: L-lactate dehydrogenase B chain (334 aa).

NAD(+) contacts are provided by residues 30–58 and Arg-100; that span reads GQVGMACAVSILLRDLCDELALVDVMEDR. Substrate is bound by residues Arg-107, Asn-139, and Arg-170. Residue Asn-139 coordinates NAD(+). His-194 acts as the Proton acceptor in catalysis. Thr-249 serves as a coordination point for substrate.

It belongs to the LDH/MDH superfamily. LDH family. As to quaternary structure, homotetramer.

The protein resides in the cytoplasm. It catalyses the reaction (S)-lactate + NAD(+) = pyruvate + NADH + H(+). It participates in fermentation; pyruvate fermentation to lactate; (S)-lactate from pyruvate: step 1/1. In terms of biological role, interconverts simultaneously and stereospecifically pyruvate and lactate with concomitant interconversion of NADH and NAD(+). The polypeptide is L-lactate dehydrogenase B chain (ldhb) (Fundulus heteroclitus (Killifish)).